A 285-amino-acid polypeptide reads, in one-letter code: RNase adapter protein RapZ (285 aa).

8–15 (GRSGSGKS) is an ATP binding site. Residue 56-59 (DVRN) participates in GTP binding. The segment at 266-285 (RSRGKNVQSRHRTLEKRKPS) is RNA-binding.

It belongs to the RapZ-like family. RapZ subfamily. As to quaternary structure, homotrimer.

In terms of biological role, modulates the synthesis of GlmS, by affecting the processing and stability of the regulatory small RNA GlmZ. When glucosamine-6-phosphate (GlcN6P) concentrations are high in the cell, RapZ binds GlmZ and targets it to cleavage by RNase E. Consequently, GlmZ is inactivated and unable to activate GlmS synthesis. Under low GlcN6P concentrations, RapZ is sequestered and inactivated by an other regulatory small RNA, GlmY, preventing GlmZ degradation and leading to synthesis of GlmS. In Pectobacterium atrosepticum (strain SCRI 1043 / ATCC BAA-672) (Erwinia carotovora subsp. atroseptica), this protein is RNase adapter protein RapZ.